Consider the following 101-residue polypeptide: MSKVSPTETERCIESLLAVFQRYAGREGDNLKLSKKEFRTFMNTELASFTKNQKDPAVVDRMMKRLDINSDGQLDFQEFLNLIGGIAVACHDALLVQPPHP.

2 consecutive EF-hand domains span residues 13 to 48 (IESL…ELAS) and 54 to 89 (KDPA…IAVA). The Ca(2+) site is built by Asn-30, Lys-32, Glu-37, Asp-67, Asn-69, Asp-71, Gln-73, and Glu-78.

Belongs to the S-100 family. In terms of assembly, homodimer; disulfide-linked. Smooth muscle and non-muscle tissues.

The polypeptide is Protein S100-A11 (S100A11) (Gallus gallus (Chicken)).